A 298-amino-acid chain; its full sequence is tRNA pseudouridine synthase B (298 aa).

The active-site Nucleophile is D42.

This sequence belongs to the pseudouridine synthase TruB family. Type 1 subfamily.

It carries out the reaction uridine(55) in tRNA = pseudouridine(55) in tRNA. Its function is as follows. Responsible for synthesis of pseudouridine from uracil-55 in the psi GC loop of transfer RNAs. This chain is tRNA pseudouridine synthase B, found in Mycobacterium tuberculosis (strain CDC 1551 / Oshkosh).